A 367-amino-acid chain; its full sequence is Glutamate 5-kinase (367 aa).

Lys10 is a binding site for ATP. Substrate-binding residues include Ser50, Asp137, and Asn149. Residues 169–170 and 211–217 contribute to the ATP site; these read TD and TGGMGTK. Residues 275–353 enclose the PUA domain; that stretch reads AGEITVDDGA…QEISEILGYE (79 aa).

It belongs to the glutamate 5-kinase family.

Its subcellular location is the cytoplasm. The catalysed reaction is L-glutamate + ATP = L-glutamyl 5-phosphate + ADP. The protein operates within amino-acid biosynthesis; L-proline biosynthesis; L-glutamate 5-semialdehyde from L-glutamate: step 1/2. With respect to regulation, proline-mediated feedback inhibition. Catalyzes the transfer of a phosphate group to glutamate to form L-glutamate 5-phosphate. In Serratia marcescens, this protein is Glutamate 5-kinase.